The sequence spans 141 residues: Hemoglobin subunit alpha-D/D' (141 aa).

In terms of domain architecture, Globin spans methionine 1–arginine 141. Heme b contacts are provided by histidine 58 and histidine 87.

The protein belongs to the globin family. As to quaternary structure, heterotetramer of two alpha-D chains and two beta chains. In terms of tissue distribution, red blood cells.

Involved in oxygen transport from the lung to the various peripheral tissues. The chain is Hemoglobin subunit alpha-D/D' (HBAD) from Gyps rueppelli (Rueppell's griffon).